Here is a 465-residue protein sequence, read N- to C-terminus: MSSELMFNYTFSWPAGPKDVILTGTFDDWRGTLPLVKTAKGNFEITMPVKLANKDDTFQFKFIVDGVWCVSDSYKKEHVSEGIENNFLQITDLVETQEVAGASRIPEAGGLLCGKPPRSAGPPSTSNRKKNKRNNKKRRSKLKKKSTKNNKKSNESLDDNEEEDGVTGTTTEDVTGTSREETPLAEPTNVSKEAPGNFHILPIDQSADTTQSNGIIGGPGPVLVPNPGEIKEFTEIRDVDARELNERLNKKEEVPEPVAGPIVESSVTEKSPALPQADDPIVETKEVAHNVQELTPQVEAVTPLINEPEPLPTPEAQISIPESSKVEPVEGSLQSKLVEKRESTEGVLDGSKKVENKAKKDEEVFTLDPIVNKAPKLPLTDEQTAEGRKSPAVSEEKEKKKKQEKGSKEVKRSETSKEKKPSAKEVKKQTVKASKKQTASPLSSSTEEPKKKKTGFFGKLKKLFK.

Disordered stretches follow at residues 107–227 and 247–276; these read EAGG…VPNP and RLNKKEEVPEPVAGPIVESSVTEKSPALPQ. A compositionally biased stretch (basic residues) spans 127–151; sequence NRKKNKRNNKKRRSKLKKKSTKNNK. 2 positions are modified to phosphoserine: S153 and S156. A compositionally biased stretch (acidic residues) spans 156-165; it reads SLDDNEEEDG. The interval 160 to 161 is X-DNA-binding; that stretch reads NE. Low complexity predominate over residues 166–177; the sequence is VTGTTTEDVTGT. Phosphothreonine is present on T182. S271 bears the Phosphoserine mark. T295 carries the phosphothreonine modification. A disordered region spans residues 298 to 465; the sequence is VEAVTPLINE…FFGKLKKLFK (168 aa). Phosphoserine occurs at positions 319 and 343. The segment covering 337-363 has biased composition (basic and acidic residues); it reads LVEKRESTEGVLDGSKKVENKAKKDEE. The residue at position 366 (T366) is a Phosphothreonine. Composition is skewed to basic and acidic residues over residues 385–398 and 404–428; these read AEGRKSPAVSEEKE and EKGSKEVKRSETSKEKKPSAKEVKK. A Phosphoserine modification is found at S394. Position 440 is a phosphoserine (S440). The span at 451–465 shows a compositional bias: basic residues; the sequence is KKKTGFFGKLKKLFK.

It belongs to the CRP1/MDG1 family. In terms of processing, cleaved in the vicinity of position 160 to give an X-DNA-binding N-terminal subpeptide and a non-DNA-binding C-terminal subpeptide.

Cruciform DNA-binding protein which exerts an enhancing effect on the cleavage of cruciform DNA (X-DNA) by endonuclease VII from bacteriophage T4. The protein is Cruciform DNA-recognizing protein 1 (CRP1) of Saccharomyces cerevisiae (strain RM11-1a) (Baker's yeast).